A 534-amino-acid chain; its full sequence is Putative fimbrium tip subunit Fim1C (534 aa).

An N-terminal signal peptide occupies residues 1-21 (MKQYKLMQVALLAILLFGWAG). Cys22 carries N-palmitoyl cysteine lipidation. The S-diacylglycerol cysteine moiety is linked to residue Cys22. Residues 22–54 (CSQNEEEVPGNVRNGIVLNVTDTGIISNEPSTR) constitute a propeptide that is removed on maturation.

It belongs to the bacteroidetes fimbrillin superfamily. Mfa-like family. As to quaternary structure, may be part of the fimbrial tip.

The protein resides in the fimbrium. It localises to the cell outer membrane. Its function is as follows. Probably a component of the fimbrium tip. Fimbriae are filamentous appendages on the cell surface that mediate cell adhesion and biofilm formation. In Bacteroides ovatus (strain ATCC 8483 / DSM 1896 / JCM 5824 / BCRC 10623 / CCUG 4943 / NCTC 11153), this protein is Putative fimbrium tip subunit Fim1C.